The chain runs to 92 residues: uncharacterized protein (92 aa).

The 59-residue stretch at 25-83 folds into the HTH cro/C1-type domain; the sequence is LEEKLKQEKIDRKYLAQVTNIPYTTVSRIMRAEANREFNPEIDTILKIAKYFNCTMDEV. The segment at residues 36 to 55 is a DNA-binding region (H-T-H motif); the sequence is RKYLAQVTNIPYTTVSRIMR.

This is an uncharacterized protein from Rickettsia prowazekii (strain Madrid E).